A 112-amino-acid polypeptide reads, in one-letter code: Large ribosomal subunit protein uL18 (112 aa).

This sequence belongs to the universal ribosomal protein uL18 family. In terms of assembly, part of the 50S ribosomal subunit; part of the 5S rRNA/L5/L18/L25 subcomplex. Contacts the 5S and 23S rRNAs.

In terms of biological role, this is one of the proteins that bind and probably mediate the attachment of the 5S RNA into the large ribosomal subunit, where it forms part of the central protuberance. This Thermus thermophilus (strain ATCC BAA-163 / DSM 7039 / HB27) protein is Large ribosomal subunit protein uL18.